The sequence spans 97 residues: Eclosion hormone (97 aa).

An N-terminal signal peptide occupies residues 1-17 (MNCKPLILCTFVAVAMC). Disulfide bonds link cysteine 48-cysteine 72, cysteine 52-cysteine 68, and cysteine 55-cysteine 83.

It belongs to the insect eclosion hormone family. Expressed in a single pair of brain neurons which extend their processes the entire length of the central nervous system and also to the corpora cardiaca portion of the ring gland. These cells show massive depletion of immunoreactive Eh at ecdysis.

It localises to the secreted. Its function is as follows. Neuropeptide that triggers the performance of ecdysis behaviors at the end of a molt. It triggers adult behavior patterns: larval, pupal and adult ecdysis, and plasticization during the molt. This Drosophila melanogaster (Fruit fly) protein is Eclosion hormone (Eh).